We begin with the raw amino-acid sequence, 108 residues long: Phosphoribosyl-ATP pyrophosphatase (108 aa).

The protein belongs to the PRA-PH family.

It localises to the cytoplasm. The enzyme catalyses 1-(5-phospho-beta-D-ribosyl)-ATP + H2O = 1-(5-phospho-beta-D-ribosyl)-5'-AMP + diphosphate + H(+). The protein operates within amino-acid biosynthesis; L-histidine biosynthesis; L-histidine from 5-phospho-alpha-D-ribose 1-diphosphate: step 2/9. The chain is Phosphoribosyl-ATP pyrophosphatase from Dechloromonas aromatica (strain RCB).